The primary structure comprises 943 residues: MATPSMMPQWAYMHIAGQDASEYLSPGLVQFARATDTYFSLGNKFRNPTVAPTHDVTTDRSQRLTLRFVPVDREDTTYSYKARFTLAVGDNRVLDMASTYFDIRGVLDRGPSFKPYSGTAYNSLAPKGAPNSSQWLAKDTNAGDQALKTHTHGVAAMGGTDITAKGLQIGVDTTENKNEPIYANEIYQPEPQVGEENLQDVENFYGGRALKKETKMKPCYGSFARPTNEKGGQAKFLTDGDGQLTKNHDITMNFFDTPGGTVGQDTELEADIVMYAENVHLETPDTHVVYKPGTSDESSEANLVQQSMPNRPNYIGFRDNFVGLMYYNSTGNMGVLAGQASQLNAVVDLQDRNTELSYQLLLDSLGDRTRYFSMWNSAVDSYDPDVRIIENHGVEDELPNYCFPLDGAGTNATYQGVKVKNGQDGDVNADWEKDPNLASRNQICKGNIFAMEINLQANLWKSFLYSNVALYLPDSYKYTPANVTLPANTNTYEYMNGRVVAPSLVDAYINIGARWSLDPMDNVNPFNHHRNAGLRYRSMLLGNGRYVPFHIQVPQKFFAIKNLLLLPGSYTYEWNFRKDVNMILQSSLGNDLRVDGASVRFDSVNLYATFFPMAHNTASTLEAMLRNDTNDQSFNDYLSAANMLYPIPAKATNVPISIPSRNWAAFRGWSFTRLKTKETPSLGSGFDPYFVYSGSIPYLDGTFYLNHTFKKVSIMFDSSVSWPGNDRLLTPNEFEIKRSVDGEGYNVAQCNMTKDWFLVQMLSHYNIGYQGFHVPEGYKDRMYSFFRNFQPMSRQVVDEINYKDYKAVTLPFQHNNSGFTGYLAPTMRQGQPYPANFPYPLIGQTAVPSVTQKKFLCDRVMWRIPFSSNFMSMGALTDLGQNMLYANSAHALDMTFEVDPMDEPTLLYLLFEVFDVVRVHQPHRGVIEAVYLRTPFSAGNATT.

A2 carries the post-translational modification N-acetylalanine; by host. Y931 carries the phosphotyrosine; by host modification.

This sequence belongs to the adenoviridae hexon protein family. As to quaternary structure, homotrimer. Interacts with the capsid vertex protein; this interaction binds the peripentonal hexons to the neighboring penton base. Interacts with the hexon-linking protein; this interaction tethers the hexons surrounding the penton to those situated in the central plate of the facet. Interacts with the hexon-interlacing protein; this interaction lashes the hexons together. Interacts with host dyneins DYNC1LI1 and DYNC1I2; this interaction might be involved in intracellular microtubule-dependent transport of incoming viral capsid. Interacts with the shutoff protein; this interaction allows folding and formation of hexons trimers. Interacts with pre-protein VI; this interaction probably allows nuclear import of hexon trimers and possibly pre-capsid assembly.

It localises to the virion. The protein localises to the host nucleus. Major capsid protein that self-associates to form 240 hexon trimers, each in the shape of a hexagon, building most of the pseudo T=25 capsid. Assembled into trimeric units with the help of the chaperone shutoff protein. Transported by pre-protein VI to the nucleus where it associates with other structural proteins to form an empty capsid. Might be involved, through its interaction with host dyneins, in the intracellular microtubule-dependent transport of incoming viral capsid to the nucleus. The chain is Hexon protein from Human adenovirus D serotype 9 (HAdV-9).